The following is a 568-amino-acid chain: Urease subunit alpha (568 aa).

A Urease domain is found at 130-568 (GGIDTHIHFI…LPMAQRYFLF (439 aa)). Positions 135, 137, and 218 each coordinate Ni(2+). Lys-218 bears the N6-carboxylysine mark. His-220 lines the substrate pocket. His-247 and His-273 together coordinate Ni(2+). His-321 (proton donor) is an active-site residue. Asp-361 lines the Ni(2+) pocket.

Belongs to the metallo-dependent hydrolases superfamily. Urease alpha subunit family. In terms of assembly, heterotrimer of UreA (gamma), UreB (beta) and UreC (alpha) subunits. Three heterotrimers associate to form the active enzyme. Requires Ni cation as cofactor. In terms of processing, carboxylation allows a single lysine to coordinate two nickel ions.

Its subcellular location is the cytoplasm. The enzyme catalyses urea + 2 H2O + H(+) = hydrogencarbonate + 2 NH4(+). The protein operates within nitrogen metabolism; urea degradation; CO(2) and NH(3) from urea (urease route): step 1/1. The chain is Urease subunit alpha from Burkholderia cenocepacia (strain ATCC BAA-245 / DSM 16553 / LMG 16656 / NCTC 13227 / J2315 / CF5610) (Burkholderia cepacia (strain J2315)).